The sequence spans 526 residues: pH-sensitive chloride channel 2 (526 aa).

Residues 1-18 (MDTLGIFVLISYLGLSSA) form the signal peptide. The Extracellular portion of the chain corresponds to 19-300 (AGVHLGDLQQ…VLLTREVGYY (282 aa)). N33, N42, N52, N192, N231, N264, N271, and N283 each carry an N-linked (GlcNAc...) asparagine glycan. Residues 301-321 (VIDYFLPSIMIVTISWVSFWL) form a helical membrane-spanning segment. The Cytoplasmic segment spans residues 322–327 (QADQTP). A helical transmembrane segment spans residues 328 to 347 (ARTTLGCTTLLSFITLSLSQ). Residues 348-360 (ENNLMKVSYVTMS) lie on the Extracellular side of the membrane. The chain crosses the membrane as a helical span at residues 361-381 (EVWFLVCTIFIFGSLVEFAFV). At 382 to 505 (NTIWRRNNDL…VSLWIDRKMR (124 aa)) the chain is on the cytoplasmic side. Residues 463–488 (ISLDEQDETSTSESSDSSKEKPAQTF) form a disordered region. The chain crosses the membrane as a helical span at residues 506–526 (FVFPLSFIVFNALFWTLVYCL).

It belongs to the ligand-gated ion channel (TC 1.A.9) family. In third-instar larvae, expressed in the principal cells of the excretory Malpighian tubules (at protein level). Also detected in the enterocytes of the copper cell region and the iron cell region of the larval midgut (at protein level). In the copper cell region expression is confined to the interstitial cells and in the iron cell region it is expressed in the anterior portion (at protein level). Expressed in the Malpighian tubules and the middle midgut of third instar larvae and adults.

The protein localises to the apical cell membrane. It localises to the cell projection. The protein resides in the microvillus membrane. It is found in the late endosome membrane. Its subcellular location is the lysosome membrane. It carries out the reaction chloride(in) = chloride(out). In terms of biological role, ligand and pH-gated channel that mediates chloride transport primarily in the mid-gut and thereby functions in larval metabolism and fluid homeostasis. Channel opening is triggered by zinc binding or, to a lesser extent, an increase in extracellular pH. Zinc-dependent activity in the mid-gut is required for modulating Tor-dependent metabolic programs that promote larval feeding and systematic growth. It may therefore act as an intestinal zinc sensor that mediates larval growth and metabolism in response to micronutrient availability. Activates Tor signaling via its activity in maintaining lysosome homeostasis in interstitial cells and/or by its role in activating the release of insulin-like peptides in the brain after feeding, via an unknown mechanism. Functions in lysosome homeostasis by regulating chloride transport into enterocyte lysosomes to sustain V-ATPase function which maintains lysosomal acidification and consequently promotes Tor activation at the lysosome membrane. Also appears to play a role in regulating fluid secretion and osmotic homeostasis in Malpighian tubules in response to the pH of extracellular urine. This function is important for proper urine production during diuresis. This chain is pH-sensitive chloride channel 2, found in Drosophila melanogaster (Fruit fly).